The sequence spans 161 residues: Protein ZMO0507 (161 aa).

Belongs to the free Met sulfoxide reductase family.

The polypeptide is Protein ZMO0507 (Zymomonas mobilis subsp. mobilis (strain ATCC 31821 / ZM4 / CP4)).